A 349-amino-acid polypeptide reads, in one-letter code: ATPase GET3 (349 aa).

ATP is bound at residue 26–33 (KGGVGKTT). The active site involves Asp57. Glu242 and Asn269 together coordinate ATP. Zn(2+)-binding residues include Cys281 and Cys284.

Belongs to the arsA ATPase family. In terms of assembly, homodimer. Component of the Golgi to ER traffic (GET) complex, which is composed of GET1, GET2 and GET3. Within the complex, GET1 and GET2 form a heterotetramer which is stabilized by phosphatidylinositol binding and which binds to the GET3 homodimer. Interacts with the chloride channel protein GEF1.

It localises to the cytoplasm. It is found in the endoplasmic reticulum. The protein resides in the golgi apparatus. ATPase required for the post-translational delivery of tail-anchored (TA) proteins to the endoplasmic reticulum. Recognizes and selectively binds the transmembrane domain of TA proteins in the cytosol. This complex then targets to the endoplasmic reticulum by membrane-bound receptors GET1 and GET2, where the tail-anchored protein is released for insertion. This process is regulated by ATP binding and hydrolysis. ATP binding drives the homodimer towards the closed dimer state, facilitating recognition of newly synthesized TA membrane proteins. ATP hydrolysis is required for insertion. Subsequently, the homodimer reverts towards the open dimer state, lowering its affinity for the GET1-GET2 receptor, and returning it to the cytosol to initiate a new round of targeting. Cooperates with the HDEL receptor ERD2 to mediate the ATP-dependent retrieval of resident ER proteins that contain a C-terminal H-D-E-L retention signal from the Golgi to the ER. Involved in low-level resistance to the oxyanions arsenite and arsenate, and in heat tolerance. In Lodderomyces elongisporus (strain ATCC 11503 / CBS 2605 / JCM 1781 / NBRC 1676 / NRRL YB-4239) (Yeast), this protein is ATPase GET3.